The following is a 95-amino-acid chain: Mitochondrial import inner membrane translocase subunit Tim9 (95 aa).

The Twin CX3C motif signature appears at 35 to 59; it reads CFTDCIRDFTTRDVKDSEEKCSLNC. 2 disulfides stabilise this stretch: cysteine 35-cysteine 59 and cysteine 39-cysteine 55.

This sequence belongs to the small Tim family. In terms of assembly, heterohexamer; composed of 3 copies of Tim9 and 3 copies of Tim10, named soluble 70 kDa complex. The complex associates with the Tim22 component of the TIM22 complex. Interacts with multi-pass transmembrane proteins in transit.

The protein resides in the mitochondrion inner membrane. Mitochondrial intermembrane chaperone that participates in the import and insertion of multi-pass transmembrane proteins into the mitochondrial inner membrane. May also be required for the transfer of beta-barrel precursors from the TOM complex to the sorting and assembly machinery (SAM complex) of the outer membrane. Acts as a chaperone-like protein that protects the hydrophobic precursors from aggregation and guide them through the mitochondrial intermembrane space. The polypeptide is Mitochondrial import inner membrane translocase subunit Tim9 (Tim9a) (Drosophila melanogaster (Fruit fly)).